A 150-amino-acid chain; its full sequence is Deoxyuridine 5'-triphosphate nucleotidohydrolase (150 aa).

Substrate is bound by residues 69-71 (RSG), Asn-82, 86-88 (LID), and Met-96.

It belongs to the dUTPase family. Mg(2+) serves as cofactor.

The enzyme catalyses dUTP + H2O = dUMP + diphosphate + H(+). The protein operates within pyrimidine metabolism; dUMP biosynthesis; dUMP from dCTP (dUTP route): step 2/2. This enzyme is involved in nucleotide metabolism: it produces dUMP, the immediate precursor of thymidine nucleotides and it decreases the intracellular concentration of dUTP so that uracil cannot be incorporated into DNA. The chain is Deoxyuridine 5'-triphosphate nucleotidohydrolase from Leptothrix cholodnii (strain ATCC 51168 / LMG 8142 / SP-6) (Leptothrix discophora (strain SP-6)).